The sequence spans 475 residues: MGCVQSFRNFCDRPKNTNVRISLPAVCFVWQIAMIILFGVFIRYNEEADTHWVEYRKKENISSDIENDFYFRYPSFQDVHVMIFVGFGFLMTFLKRYSFGAVGFNFLIAAFGLQWALLMQGWFHSLDYTDGKIKIGIENLINADFCVAGCLIAYGAVLGKVSPVQLMVLTLFGITLFAVEEYIILNLIHARDAGGSMVIHTFGGYYGLSISWMLYRPNLEQSSNLQGSVYQSDVFAMIGTLFLWMFWPSFNSAITDHGDGQHRAAINTYLALASTVLTTVAISSLFQKHGKLDMVHIQNSTLAGGVAVGTAAEFMLMPYGSLIVGFCCGIISTLGYIYLTPFMEKYLKIQDTCGIHNLHAMPGLIGGIVGAITAAAATESVYGKEGLVNTFDFVGPFKNMVPTTQGGHQAAGLCVAICFGIGGGIMVGCILRLPIWCDPADDNCFNDEPYWELPEEEEIIPPILHYNNHMVNKDV.

Residues 1-20 (MGCVQSFRNFCDRPKNTNVR) are Cytoplasmic-facing. The chain crosses the membrane as a helical span at residues 21 to 41 (ISLPAVCFVWQIAMIILFGVF). Over 42–73 (IRYNEEADTHWVEYRKKENISSDIENDFYFRY) the chain is Extracellular. Residue asparagine 60 is glycosylated (N-linked (GlcNAc...) asparagine). The chain crosses the membrane as a helical span at residues 74 to 94 (PSFQDVHVMIFVGFGFLMTFL). The Cytoplasmic segment spans residues 95–98 (KRYS). Residues 99–119 (FGAVGFNFLIAAFGLQWALLM) traverse the membrane as a helical segment. The Extracellular segment spans residues 120-138 (QGWFHSLDYTDGKIKIGIE). Residues 139–159 (NLINADFCVAGCLIAYGAVLG) form a helical membrane-spanning segment. Topologically, residues 160–167 (KVSPVQLM) are cytoplasmic. The chain crosses the membrane as a helical span at residues 168 to 188 (VLTLFGITLFAVEEYIILNLI). Residues 189 to 193 (HARDA) lie on the Extracellular side of the membrane. A helical transmembrane segment spans residues 194 to 214 (GGSMVIHTFGGYYGLSISWML). Topologically, residues 215–233 (YRPNLEQSSNLQGSVYQSD) are cytoplasmic. A helical transmembrane segment spans residues 234-254 (VFAMIGTLFLWMFWPSFNSAI). The Extracellular portion of the chain corresponds to 255–265 (TDHGDGQHRAA). The chain crosses the membrane as a helical span at residues 266–286 (INTYLALASTVLTTVAISSLF). The Cytoplasmic portion of the chain corresponds to 287 to 299 (QKHGKLDMVHIQN). The helical transmembrane segment at 300–320 (STLAGGVAVGTAAEFMLMPYG) threads the bilayer. Serine 321 is a topological domain (extracellular). Residues 322 to 342 (LIVGFCCGIISTLGYIYLTPF) traverse the membrane as a helical segment. Residues 343-357 (MEKYLKIQDTCGIHN) lie on the Cytoplasmic side of the membrane. Residues 358 to 378 (LHAMPGLIGGIVGAITAAAAT) form a helical membrane-spanning segment. The Extracellular segment spans residues 379 to 410 (ESVYGKEGLVNTFDFVGPFKNMVPTTQGGHQA). The helical transmembrane segment at 411–431 (AGLCVAICFGIGGGIMVGCIL) threads the bilayer. Residues 432-475 (RLPIWCDPADDNCFNDEPYWELPEEEEIIPPILHYNNHMVNKDV) are Cytoplasmic-facing.

The protein belongs to the ammonium transporter (TC 2.A.49) family. Rh subfamily. Homotrimer.

It is found in the apical cell membrane. In terms of biological role, functions as an ammonia transporter. May play a role in the elimination of ammonia in the gill. The sequence is that of Ammonium transporter Rh type C (rhcg) from Tetraodon nigroviridis (Spotted green pufferfish).